The sequence spans 318 residues: Ribosomal RNA small subunit methyltransferase H (318 aa).

S-adenosyl-L-methionine is bound by residues 34 to 36, aspartate 53, phenylalanine 82, aspartate 103, and glutamine 110; that span reads GGH.

It belongs to the methyltransferase superfamily. RsmH family.

The protein localises to the cytoplasm. It carries out the reaction cytidine(1402) in 16S rRNA + S-adenosyl-L-methionine = N(4)-methylcytidine(1402) in 16S rRNA + S-adenosyl-L-homocysteine + H(+). Functionally, specifically methylates the N4 position of cytidine in position 1402 (C1402) of 16S rRNA. The chain is Ribosomal RNA small subunit methyltransferase H from Limosilactobacillus reuteri (strain DSM 20016) (Lactobacillus reuteri).